Reading from the N-terminus, the 478-residue chain is Cytochrome P450 monooxygenase ATR3 (478 aa).

A helical transmembrane segment spans residues A20–L42. N159 and N268 each carry an N-linked (GlcNAc...) asparagine glycan.

Belongs to the cytochrome P450 family. Requires heme as cofactor.

It localises to the membrane. The protein operates within mycotoxin biosynthesis. Its function is as follows. Cytochrome P450 monooxygenase; part of the core atranone cluster (CAC) which products are predicted to catalyze most or all steps of mycotoxin atranone synthesis, starting from geranylgeranyl pyrophosphate (GGPP). The initial cyclization of GGPP to dolabellane is probably performed by the terpene cyclase ATR13. The Baeyer-Villiger oxidation near the end of the atranone synthesis, which converts atranones D and E to atranones F and G is predicted to be catalyzed by the monooxygenase ATR8. Of the CAC's other predicted gene products, the reducing PKS ATR6 might synthesize a polyketide chain. This polyketide is probably transferred onto the atranone backbone by the polyketide transferase ATR5. Other predicted CAC products include 4 oxygenases (ATR2, ATR3, ATR4, and ATR14), 3 short-chain reductases (ATR7, ATR9, and ATR10), and a methyltransferase (ATR12). These may all be involved in the various steps of atranone biosynthesis, although their specific roles must await experimental determination. The protein is Cytochrome P450 monooxygenase ATR3 of Stachybotrys chlorohalonatus (strain IBT 40285).